The following is an 81-amino-acid chain: Probable antimicrobial peptide Con13 (81 aa).

The signal sequence occupies residues 1 to 22 (MNRKLLLVFLVVAMLVMQPAEA). The propeptide occupies 66–81 (EAGQIPFDEFMDVLYS).

It belongs to the non-disulfide-bridged peptide (NDBP) superfamily. Long chain multifunctional peptide (group 2) family. As to expression, expressed by the venom gland.

It is found in the secreted. The protein localises to the target cell membrane. At high concentrations, acts as a pore former in cellular membranes and causes the leakage of the cells. At submicromolar concentrations, degranulates granulocytes and has a weak hemolytic activity against human erythrocytes. Also strongly inhibits the production of superoxide anions. Has a strong antibacterial activity against Gram-negative bacteria but is less active against Gram-positive bacteria. Also has antifungal activity. The polypeptide is Probable antimicrobial peptide Con13 (Opisthacanthus cayaporum (South American scorpion)).